A 37-amino-acid polypeptide reads, in one-letter code: Cytochrome b6-f complex subunit 5 (37 aa).

Residues 5–25 (LPSGIVLGLIPITLAGLFVTA) traverse the membrane as a helical segment.

Belongs to the PetG family. The 4 large subunits of the cytochrome b6-f complex are cytochrome b6, subunit IV (17 kDa polypeptide, PetD), cytochrome f and the Rieske protein, while the 4 small subunits are PetG, PetL, PetM and PetN. The complex functions as a dimer.

The protein resides in the plastid. It is found in the chloroplast thylakoid membrane. In terms of biological role, component of the cytochrome b6-f complex, which mediates electron transfer between photosystem II (PSII) and photosystem I (PSI), cyclic electron flow around PSI, and state transitions. PetG is required for either the stability or assembly of the cytochrome b6-f complex. This chain is Cytochrome b6-f complex subunit 5, found in Pinus thunbergii (Japanese black pine).